We begin with the raw amino-acid sequence, 31 residues long: Diuretic hormone class 2 (31 aa).

Proline 31 carries the post-translational modification Proline amide.

The protein belongs to the diuretic hormone class 2 family.

The protein localises to the secreted. In terms of biological role, regulation of fluid secretion. Stimulates primary urine secretion by Malpighian tubules and causes a dose-dependent stimulation of cAMP levels in the tubules. Has a nonselective effect on Na(+)/K(+) ion transport. In vitro, primarily elevates intracellular Ca(2+). This chain is Diuretic hormone class 2, found in Apis mellifera (Honeybee).